We begin with the raw amino-acid sequence, 72 residues long: Heat shock factor-binding protein 1-like protein 1 (72 aa).

A coiled-coil region spans residues 12-62 (DLLQNAAENLLLEVEEHFQALTTTLNLRMEEMGSRIEDLQRNVDDLMTQAG).

Belongs to the HSBP1 family.

The chain is Heat shock factor-binding protein 1-like protein 1 (Hsbp1l1) from Mus musculus (Mouse).